The following is a 527-amino-acid chain: Cyclin-L1 (527 aa).

The segment at 1 to 37 (MASGPHPTSTAAAASASSAAPSAGGSSSGTTTTTTTT) is disordered. Cyclin-like regions lie at residues 89-191 (ELIQ…RVLK) and 204-288 (KIIV…ETLR). The residue at position 326 (T326) is a Phosphothreonine. The interval 327-527 (PALSTLGGFS…SRSGHGRHRR (201 aa)) is disordered. Phosphoserine occurs at positions 336 and 339. Glycyl lysine isopeptide (Lys-Gly) (interchain with G-Cter in SUMO2) cross-links involve residues K340 and K348. A compositionally biased stretch (basic and acidic residues) spans 343–353 (SPREVKAEEKS). Phosphoserine occurs at positions 353 and 356. The span at 362 to 371 (VKKEPEDRQQ) shows a compositional bias: basic and acidic residues. K363 is covalently cross-linked (Glycyl lysine isopeptide (Lys-Gly) (interchain with G-Cter in SUMO2)). Phosphoserine is present on S375. Basic residues-rich tracts occupy residues 383–419 (DSKR…RRSR), 439–453 (RRHH…KAKH), 461–477 (SNRH…RSQS), and 487–499 (KKHR…HRDR). The RS stretch occupies residues 391–433 (RSASRSRSRTRSRSRSHTPRRHYNNRRSRSGTYSSRSRSRSRS). S446 is subject to Phosphoserine. A compositionally biased stretch (basic and acidic residues) spans 500 to 509 (RERSRSFERS). The span at 510 to 527 (HKGKHHGGSRSGHGRHRR) shows a compositional bias: basic residues.

This sequence belongs to the cyclin family. Cyclin L subfamily. In terms of assembly, interacts with POLR2A via its hyperphosphorylated C-terminal domain (CTD). Interacts with CDK11A, CDK11B, CDK12 and CDK13. May form a ternary complex with CDK11B and casein kinase II (CKII). Interacts with pre-mRNA-splicing factors, including at least SRSF1, SRSF2 AND SRSF7/SLU7. As to expression, ubiquitous with higher level in liver; expressed in striatal neurons.

It localises to the nucleus speckle. It is found in the nucleus. The protein localises to the nucleoplasm. Functionally, involved in pre-mRNA splicing. Functions in association with cyclin-dependent kinases (CDKs). May play a role in the regulation of RNA polymerase II (pol II). Inhibited by the CDK-specific inhibitor CDKN1A/p21. This is Cyclin-L1 (Ccnl1) from Rattus norvegicus (Rat).